A 390-amino-acid polypeptide reads, in one-letter code: Chorismate synthase 1 (390 aa).

NADP(+)-binding residues include Arg39 and Arg45. The segment at 95-117 is disordered; that stretch reads EQEEKEMKRKVTKPRPGHADLNG. FMN-binding positions include 132 to 134, 253 to 254, Gly298, 313 to 317, and Arg339; these read RSS, NA, and KPIPT.

Belongs to the chorismate synthase family. Homotetramer. Requires FMNH2 as cofactor.

The enzyme catalyses 5-O-(1-carboxyvinyl)-3-phosphoshikimate = chorismate + phosphate. It participates in metabolic intermediate biosynthesis; chorismate biosynthesis; chorismate from D-erythrose 4-phosphate and phosphoenolpyruvate: step 7/7. In terms of biological role, catalyzes the anti-1,4-elimination of the C-3 phosphate and the C-6 proR hydrogen from 5-enolpyruvylshikimate-3-phosphate (EPSP) to yield chorismate, which is the branch point compound that serves as the starting substrate for the three terminal pathways of aromatic amino acid biosynthesis. This reaction introduces a second double bond into the aromatic ring system. The chain is Chorismate synthase 1 from Bacillus cereus (strain ATCC 10987 / NRS 248).